We begin with the raw amino-acid sequence, 370 residues long: D-aspartate oxidase (370 aa).

Positions 15, 49, 50, 54, 166, 317, 346, and 348 each coordinate FAD. The Microbody targeting signal motif lies at 368-370; that stretch reads ARL.

The protein belongs to the DAMOX/DASOX family. Homotetramer. FAD is required as a cofactor.

It localises to the peroxisome matrix. It catalyses the reaction D-aspartate + O2 + H2O = oxaloacetate + H2O2 + NH4(+). The enzyme catalyses D-glutamate + O2 + H2O = H2O2 + 2-oxoglutarate + NH4(+). With respect to regulation, inhibited by malonate and D-malate. Very mildly inhibited by benzoate, ethylenediaminetetraacetic acid (EDTA), crotonate and anthranilate. May be very mildly inhibited by meso-tartrate. Its function is as follows. Selectively catalyzes the oxidative deamination of acidic amino acids. Protects the organism from the toxicity of D-amino acids. Enables the organism to utilize D-amino acids as a source of nutrients. Enables the organism to utilize D-aspartate as a source of nitrogen and carbon. In Vanrija humicola (Yeast), this protein is D-aspartate oxidase.